A 130-amino-acid polypeptide reads, in one-letter code: Small ribosomal subunit protein uS9 (130 aa).

Belongs to the universal ribosomal protein uS9 family.

This chain is Small ribosomal subunit protein uS9, found in Methylococcus capsulatus (strain ATCC 33009 / NCIMB 11132 / Bath).